The primary structure comprises 533 residues: Bifunctional purine biosynthesis protein PurH (533 aa).

One can recognise an MGS-like domain in the interval 1-148 (MDTPRPIKRA…KNHKDVTIVV (148 aa)).

The protein belongs to the PurH family.

It carries out the reaction (6R)-10-formyltetrahydrofolate + 5-amino-1-(5-phospho-beta-D-ribosyl)imidazole-4-carboxamide = 5-formamido-1-(5-phospho-D-ribosyl)imidazole-4-carboxamide + (6S)-5,6,7,8-tetrahydrofolate. The catalysed reaction is IMP + H2O = 5-formamido-1-(5-phospho-D-ribosyl)imidazole-4-carboxamide. The protein operates within purine metabolism; IMP biosynthesis via de novo pathway; 5-formamido-1-(5-phospho-D-ribosyl)imidazole-4-carboxamide from 5-amino-1-(5-phospho-D-ribosyl)imidazole-4-carboxamide (10-formyl THF route): step 1/1. It participates in purine metabolism; IMP biosynthesis via de novo pathway; IMP from 5-formamido-1-(5-phospho-D-ribosyl)imidazole-4-carboxamide: step 1/1. The protein is Bifunctional purine biosynthesis protein PurH of Colwellia psychrerythraea (strain 34H / ATCC BAA-681) (Vibrio psychroerythus).